The sequence spans 1219 residues: Disease resistance-like protein DSC1 (1219 aa).

Residues 9–176 enclose the TIR domain; that stretch reads AEFDVFLSFR…EIAVDTFKKL (168 aa). Residue glutamate 83 is part of the active site. An NB-ARC domain is found at 197 to 446; sequence LEKLLSWEDL…DIACFFRSEN (250 aa). 216–222 contributes to the ATP binding site; that stretch reads GMVGIGK. LRR repeat units follow at residues 468–493, 538–563, 597–619, 620–642, 665–689, 690–713, 733–757, 759–780, 804–827, 854–877, and 878–899; these read LVDKCLITLSDNRIEMHDMLQTMAKE, TDKIRGIFLDTSKLRAMRLSAKAFQG, PNELTYLHWHGYPLQSIPLDFDP, KNLVDLKLPHSQLEEIWDDEKDV, AHNLERLNLEGCTSLKKLPSTINCL, EKLIYLNLRDCTSLRSLPKGIKTQ, SENVEVLLLDGTVIKSLPESIQTFR, LALLNLKNCKKLKHLSSDLYKL, MESLEILLMDDTSITEMPKMMHLS, CSRLTDLYLSRCSLYKLPDNIGGL, and SSLQSLCLSGNNIENLPESFNQ.

It belongs to the disease resistance NB-LRR family. In terms of assembly, interacts with CAMTA3 and DSC2.

It carries out the reaction NAD(+) + H2O = ADP-D-ribose + nicotinamide + H(+). Its function is as follows. TIR-NB-LRR receptor-like protein involved in plant defense. Acts as a trigger of hypersensitive response (HR). Functions as a guard of CAMTA3, a negative regulator of immunity, during pathogen infection. In Arabidopsis thaliana (Mouse-ear cress), this protein is Disease resistance-like protein DSC1.